The sequence spans 620 residues: Chaperone protein HscA homolog (620 aa).

The protein belongs to the heat shock protein 70 family.

Its function is as follows. Chaperone involved in the maturation of iron-sulfur cluster-containing proteins. Has a low intrinsic ATPase activity which is markedly stimulated by HscB. This Shewanella sediminis (strain HAW-EB3) protein is Chaperone protein HscA homolog.